Here is a 450-residue protein sequence, read N- to C-terminus: Tubulin beta-3 chain (450 aa).

8 residues coordinate GTP: Gln11, Glu69, Ser138, Gly142, Thr143, Gly144, Asn204, and Asn226. Glu69 lines the Mg(2+) pocket. Residues 420–450 are disordered; that stretch reads SEYQQYQDATADEEGDYEDEEEGEYQQEEEY. Residues 429–450 are compositionally biased toward acidic residues; it reads TADEEGDYEDEEEGEYQQEEEY.

Belongs to the tubulin family. Dimer of alpha and beta chains. A typical microtubule is a hollow water-filled tube with an outer diameter of 25 nm and an inner diameter of 15 nM. Alpha-beta heterodimers associate head-to-tail to form protofilaments running lengthwise along the microtubule wall with the beta-tubulin subunit facing the microtubule plus end conferring a structural polarity. Microtubules usually have 13 protofilaments but different protofilament numbers can be found in some organisms and specialized cells. The cofactor is Mg(2+).

Its subcellular location is the cytoplasm. It is found in the cytoskeleton. Functionally, tubulin is the major constituent of microtubules, a cylinder consisting of laterally associated linear protofilaments composed of alpha- and beta-tubulin heterodimers. Microtubules grow by the addition of GTP-tubulin dimers to the microtubule end, where a stabilizing cap forms. Below the cap, tubulin dimers are in GDP-bound state, owing to GTPase activity of alpha-tubulin. The sequence is that of Tubulin beta-3 chain (TUBB3) from Arabidopsis thaliana (Mouse-ear cress).